Consider the following 425-residue polypeptide: Exodeoxyribonuclease 7 large subunit (425 aa).

Belongs to the XseA family. Heterooligomer composed of large and small subunits.

Its subcellular location is the cytoplasm. The catalysed reaction is Exonucleolytic cleavage in either 5'- to 3'- or 3'- to 5'-direction to yield nucleoside 5'-phosphates.. Functionally, bidirectionally degrades single-stranded DNA into large acid-insoluble oligonucleotides, which are then degraded further into small acid-soluble oligonucleotides. This Nocardia farcinica (strain IFM 10152) protein is Exodeoxyribonuclease 7 large subunit.